Reading from the N-terminus, the 221-residue chain is 7-cyano-7-deazaguanine synthase (221 aa).

An ATP-binding site is contributed by 7–17 (LSGGMDSSTLA). Zn(2+)-binding residues include C187, C195, C198, and C201.

It belongs to the QueC family. Zn(2+) is required as a cofactor.

It catalyses the reaction 7-carboxy-7-deazaguanine + NH4(+) + ATP = 7-cyano-7-deazaguanine + ADP + phosphate + H2O + H(+). It participates in purine metabolism; 7-cyano-7-deazaguanine biosynthesis. Its function is as follows. Catalyzes the ATP-dependent conversion of 7-carboxy-7-deazaguanine (CDG) to 7-cyano-7-deazaguanine (preQ(0)). This Methanosphaerula palustris (strain ATCC BAA-1556 / DSM 19958 / E1-9c) protein is 7-cyano-7-deazaguanine synthase.